The following is a 200-amino-acid chain: MNEQPNEELQSEDEQFDPQETVSFEGETAANDEAFAEAGEETRDEEMTRLRGEVEEASKRVLQAQAEAENFRKRLRRDTEAQLKFAGMPLVTDILQVRDNLLRAIEAATTAGDGESAAGLVEGVSMVRKQLDDVLAKHAIKEIPAEGELFDPNFHEAISQMPHPEIASGMVAHVATPGFQMHDRVVRPAQVVVSTGDGSA.

Composition is skewed to acidic residues over residues M1 to D17 and A34 to D44. Residues M1–R49 form a disordered region.

The protein belongs to the GrpE family. In terms of assembly, homodimer.

It localises to the cytoplasm. Participates actively in the response to hyperosmotic and heat shock by preventing the aggregation of stress-denatured proteins, in association with DnaK and GrpE. It is the nucleotide exchange factor for DnaK and may function as a thermosensor. Unfolded proteins bind initially to DnaJ; upon interaction with the DnaJ-bound protein, DnaK hydrolyzes its bound ATP, resulting in the formation of a stable complex. GrpE releases ADP from DnaK; ATP binding to DnaK triggers the release of the substrate protein, thus completing the reaction cycle. Several rounds of ATP-dependent interactions between DnaJ, DnaK and GrpE are required for fully efficient folding. The sequence is that of Protein GrpE from Rhodopirellula baltica (strain DSM 10527 / NCIMB 13988 / SH1).